A 165-amino-acid polypeptide reads, in one-letter code: Nascent polypeptide-associated complex subunit alpha (165 aa).

The region spanning 14-78 (NRNEKKAREL…AKVDNFTQRL (65 aa)) is the NAC-A/B domain. The UBA domain maps to 126–165 (LSNDDIDLVVQQTNATKGQAIKALKEHNGDIVNAIMSLSK).

The protein belongs to the NAC-alpha family. In terms of assembly, part of the nascent polypeptide-associated complex (NAC), consisting of EGD2 and EGD1. NAC associates with ribosomes via EGD1.

It is found in the cytoplasm. It localises to the nucleus. Functionally, component of the nascent polypeptide-associated complex (NAC), a dynamic component of the ribosomal exit tunnel, protecting the emerging polypeptides from interaction with other cytoplasmic proteins to ensure appropriate nascent protein targeting. The NAC complex also promotes mitochondrial protein import by enhancing productive ribosome interactions with the outer mitochondrial membrane and blocks the inappropriate interaction of ribosomes translating non-secretory nascent polypeptides with translocation sites in the membrane of the endoplasmic reticulum. EGD2 may also be involved in transcription regulation. This chain is Nascent polypeptide-associated complex subunit alpha (EGD2), found in Candida glabrata (strain ATCC 2001 / BCRC 20586 / JCM 3761 / NBRC 0622 / NRRL Y-65 / CBS 138) (Yeast).